A 331-amino-acid polypeptide reads, in one-letter code: Ketol-acid reductoisomerase (NADP(+)) (331 aa).

The KARI N-terminal Rossmann domain occupies 2 to 182 (AKMYYDKDAD…GGTRAGVIET (181 aa)). NADP(+)-binding positions include 25–28 (FGSQ), serine 51, serine 53, and 83–86 (DEKQ). Residue histidine 108 is part of the active site. Position 134 (glycine 134) interacts with NADP(+). The 146-residue stretch at 183–328 (TFKEETETDL…KGLREMMAWI (146 aa)) folds into the KARI C-terminal knotted domain. 4 residues coordinate Mg(2+): aspartate 191, glutamate 195, glutamate 227, and glutamate 231. Serine 252 is a binding site for substrate.

This sequence belongs to the ketol-acid reductoisomerase family. Mg(2+) is required as a cofactor.

The enzyme catalyses (2R)-2,3-dihydroxy-3-methylbutanoate + NADP(+) = (2S)-2-acetolactate + NADPH + H(+). It carries out the reaction (2R,3R)-2,3-dihydroxy-3-methylpentanoate + NADP(+) = (S)-2-ethyl-2-hydroxy-3-oxobutanoate + NADPH + H(+). It participates in amino-acid biosynthesis; L-isoleucine biosynthesis; L-isoleucine from 2-oxobutanoate: step 2/4. Its pathway is amino-acid biosynthesis; L-valine biosynthesis; L-valine from pyruvate: step 2/4. Functionally, involved in the biosynthesis of branched-chain amino acids (BCAA). Catalyzes an alkyl-migration followed by a ketol-acid reduction of (S)-2-acetolactate (S2AL) to yield (R)-2,3-dihydroxy-isovalerate. In the isomerase reaction, S2AL is rearranged via a Mg-dependent methyl migration to produce 3-hydroxy-3-methyl-2-ketobutyrate (HMKB). In the reductase reaction, this 2-ketoacid undergoes a metal-dependent reduction by NADPH to yield (R)-2,3-dihydroxy-isovalerate. The chain is Ketol-acid reductoisomerase (NADP(+)) from Thermoanaerobacter sp. (strain X514).